Reading from the N-terminus, the 906-residue chain is Formin-like protein 16 (906 aa).

Residues 1-28 (MAPAPSPTPLPLFLLLLLLVGVAPLAAA) form the signal peptide. The segment at 34–76 (QTRFPSTRTPAFATPPPITSPSPSPGTPTATPSSSPPSSSGKR) is disordered. The span at 46-59 (ATPPPITSPSPSPG) shows a compositional bias: pro residues. The span at 60–73 (TPTATPSSSPPSSS) shows a compositional bias: low complexity. The helical transmembrane segment at 81 to 101 (VAVVSTALSSFAVSGLAFFLF) threads the bilayer. Disordered regions lie at residues 113–149 (AGGA…VDEN), 161–223 (KEGD…SLDS), 250–404 (AYAR…DQQA), 451–474 (RKTK…GRSN), 677–702 (GSLA…REER), and 834–906 (LQQQ…SDEE). Residues 114 to 128 (GGAGQHYGGAQGGAL) show a composition bias toward gly residues. A compositionally biased stretch (pro residues) spans 174–185 (SRRPPQPPPPRP). The segment covering 186–196 (YRAERRQDAHE) has biased composition (basic and acidic residues). Over residues 270-294 (SPSPAPAPAARPASPSPSLPLPPGR) the composition is skewed to pro residues. The span at 295–310 (ESPSRPQSIAAAAVAS) shows a compositional bias: low complexity. Residues 311-383 (PAPPPPPPPK…KGGPPPPPPK (73 aa)) are compositionally biased toward pro residues. One can recognise an FH2 domain in the interval 396 to 849 (PTGSADQQAK…PTPPPSSSQP (454 aa)). 2 stretches are compositionally biased toward polar residues: residues 463 to 474 (GGSTSAGLGRSN) and 677 to 697 (GSLA…SQGP). The span at 847–866 (SQPAAPAATTKGAADDAPAP) shows a compositional bias: low complexity.

The protein belongs to the formin-like family. Class-I subfamily.

Its subcellular location is the membrane. In Oryza sativa subsp. japonica (Rice), this protein is Formin-like protein 16 (FH16).